The sequence spans 195 residues: Inner membrane-spanning protein YciB (195 aa).

5 helical membrane passes run 34–54, 65–85, 88–108, 131–151, and 160–180; these read IYGA…ALWL, FTLG…EDTF, WKAP…HFIG, LNIA…YVVF, and FKVF…GIFL.

Belongs to the YciB family.

It is found in the cell inner membrane. In terms of biological role, plays a role in cell envelope biogenesis, maintenance of cell envelope integrity and membrane homeostasis. This is Inner membrane-spanning protein YciB from Pseudomonas paraeruginosa (strain DSM 24068 / PA7) (Pseudomonas aeruginosa (strain PA7)).